A 470-amino-acid chain; its full sequence is MVQAKAGFKAGVQDYRLTYYTPDYTPKDTDLLACFRMTPQPGVPAEEAAAAVAAESSTGTWTTVWTDNLTDLDRYKGRCYDLEAVPNEDNQYFAFIAYPLDLFEEGSVTNVLTSLVGNVFGFKALRALRLEDIRFPVALIKTFQGPPHGITVERDKLNKYGRPLLGCTIKPKLGLSAKNYGRAVYECLRGGLDFTKDDENINSQPFMRWRDRFLFVQEAIEKAQAETNEMKGHYLNVTAGTCEEMMKRAEFAKEIGTPIIMHDFFTGGFTANTTLARWCRDNGILLHIHRAMHAVVDRQKNHGIHFRVLAKCLRLSGGDHLHSGTVVGKLEGERGITMGFVDLMREDYVEEDRSRGIFFTQDYASMPGTMPVASGGIHVWHMPALVEIFGDDSCLQFGGGTLGHPWGNAPGATANRVALEACVQARNEGRNLAREGNDVIREACRWSPELAAACELWKEIKFEFEAMDTL.

Residues Asn-118 and Thr-168 each contribute to the substrate site. Lys-170 acts as the Proton acceptor in catalysis. A substrate-binding site is contributed by Lys-172. Mg(2+) contacts are provided by Lys-196, Asp-198, and Glu-199. Position 196 is an N6-carboxylysine (Lys-196). The active-site Proton acceptor is His-289. Positions 290, 322, and 374 each coordinate substrate.

It belongs to the RuBisCO large chain family. Type I subfamily. Heterohexadecamer of 8 large chains and 8 small chains; disulfide-linked. The disulfide link is formed within the large subunit homodimers. RuBisCO interacts with the C-terminus of CcmM, and can be found in complexes that also include carbonic anhydrase (ccaA). RuBisCO associates with both the internal and shell portion of carboxysomes. Mg(2+) is required as a cofactor. The disulfide bond which can form in the large chain dimeric partners within the hexadecamer appears to be associated with oxidative stress and protein turnover.

The protein resides in the carboxysome. It carries out the reaction 2 (2R)-3-phosphoglycerate + 2 H(+) = D-ribulose 1,5-bisphosphate + CO2 + H2O. The enzyme catalyses D-ribulose 1,5-bisphosphate + O2 = 2-phosphoglycolate + (2R)-3-phosphoglycerate + 2 H(+). Its function is as follows. RuBisCO catalyzes two reactions: the carboxylation of D-ribulose 1,5-bisphosphate, the primary event in carbon dioxide fixation, as well as the oxidative fragmentation of the pentose substrate in the photorespiration process. Both reactions occur simultaneously and in competition at the same active site. The polypeptide is Ribulose bisphosphate carboxylase large chain (Synechocystis sp. (strain ATCC 27184 / PCC 6803 / Kazusa)).